The sequence spans 196 residues: C-type lectin domain family 3 member A (196 aa).

The first 22 residues, 1–22 (MAKNGLVLCILVVSLLLDQTDG), serve as a signal peptide directing secretion. 3 cysteine pairs are disulfide-bonded: cysteine 68-cysteine 78, cysteine 95-cysteine 191, and cysteine 167-cysteine 183. Residues 74–192 (VHKKCYLASE…CRSSKRYICE (119 aa)) enclose the C-type lectin domain.

It localises to the secreted. Functionally, promotes cell adhesion to laminin and fibronectin. The sequence is that of C-type lectin domain family 3 member A (Clec3a) from Mus musculus (Mouse).